A 557-amino-acid chain; its full sequence is Urocanate hydratase (557 aa).

Residues 53–54, Q131, 177–179, E197, R202, 243–244, 264–268, 274–275, and Y323 contribute to the NAD(+) site; these read GG, GMG, NA, QTSAH, and YL. C411 is an active-site residue. Residue G493 coordinates NAD(+).

This sequence belongs to the urocanase family. Requires NAD(+) as cofactor.

Its subcellular location is the cytoplasm. The enzyme catalyses 4-imidazolone-5-propanoate = trans-urocanate + H2O. It participates in amino-acid degradation; L-histidine degradation into L-glutamate; N-formimidoyl-L-glutamate from L-histidine: step 2/3. Catalyzes the conversion of urocanate to 4-imidazolone-5-propionate. This chain is Urocanate hydratase, found in Pseudomonas entomophila (strain L48).